We begin with the raw amino-acid sequence, 309 residues long: Pyridoxal 5'-phosphate synthase subunit PDX1.1 (309 aa).

N-acetylmethionine is present on Met1. Residue Asp41 coordinates D-ribose 5-phosphate. Lys98 acts as the Schiff-base intermediate with D-ribose 5-phosphate in catalysis. Residue Gly170 participates in D-ribose 5-phosphate binding. Arg182 contacts D-glyceraldehyde 3-phosphate. D-ribose 5-phosphate contacts are provided by residues Gly231 and 252 to 253 (GS).

It belongs to the PdxS/SNZ family. In terms of assembly, homodimer or heterodimer with PDX1.2 or PDX1.3. Interacts with PDX2. In terms of tissue distribution, expressed in flowers, shoots, leaves and weakly in roots.

The protein resides in the cytoplasm. It carries out the reaction aldehydo-D-ribose 5-phosphate + D-glyceraldehyde 3-phosphate + L-glutamine = pyridoxal 5'-phosphate + L-glutamate + phosphate + 3 H2O + H(+). Its pathway is cofactor biosynthesis; pyridoxal 5'-phosphate biosynthesis. Its function is as follows. Catalyzes the formation of pyridoxal 5'-phosphate from ribose 5-phosphate (RBP), glyceraldehyde 3-phosphate (G3P) and ammonia. The ammonia is provided by PDX2. Can also use ribulose 5-phosphate and dihydroxyacetone phosphate as substrates, resulting from enzyme-catalyzed isomerization of RBP and G3P, respectively. Also plays an indirect role in resistance to singlet oxygen-generating photosensitizers. The chain is Pyridoxal 5'-phosphate synthase subunit PDX1.1 (PDX11) from Arabidopsis thaliana (Mouse-ear cress).